The sequence spans 647 residues: Zinc finger CCCH domain-containing protein 19 (647 aa).

C3H1-type zinc fingers lie at residues 16–45 (RRRSTDCIYFLASPLTCKKGSECEYRHSDA) and 47–73 (RMNPRDCWYWFNGNCANPKCSFRHPPL). Positions 78 to 106 (GAPTTPRTSQQSAPQVSVPAQAPVPNPAS) are disordered. The segment covering 86-106 (SQQSAPQVSVPAQAPVPNPAS) has biased composition (low complexity). The segment at 109-136 (AKQGVPCYYFQKGMCVKGDRCAFLHLPQ) adopts a C3H1-type 3 zinc-finger fold. Disordered regions lie at residues 155–280 (VPHP…RTNG), 308–327 (LSESRFSQREPMPLTADSSD), 335–452 (QRRL…DAES), 512–580 (LKRK…LSPA), and 586–605 (EAADDASRELEEQQDVETAE). Polar residues-rich tracts occupy residues 160–175 (LKNSWTKPNSSAQQNA) and 189–203 (NGKTAQKQNLTNRAG). Residues 267-280 (SLREDRGAYRRTNG) are compositionally biased toward basic and acidic residues. Residues 347-359 (SDRHNVYPEDERH) show a composition bias toward basic and acidic residues. A compositionally biased stretch (polar residues) spans 369-379 (QASNDGVSSSR). Residues 419-433 (LRGKLHDRLKAKPNE) are compositionally biased toward basic and acidic residues. The segment covering 435 to 445 (VSGNVQSSLSK) has biased composition (polar residues). Residues 527 to 536 (GSKREEHSGG) show a composition bias toward basic and acidic residues.

The protein is Zinc finger CCCH domain-containing protein 19 of Oryza sativa subsp. japonica (Rice).